A 396-amino-acid chain; its full sequence is uncharacterized protein (396 aa).

12 helical membrane passes run 12 to 32 (LLAL…SVGL), 48 to 68 (GLTV…LTSL), 78 to 98 (LLWI…ASSI), 106 to 126 (VISA…AADI), 138 to 158 (IMFT…TFIG), 165 to 185 (FAFM…GILV), 209 to 229 (LLLL…VFTY), 242 to 262 (AGTV…GNMI), 271 to 291 (PIAA…VLTF), 297 to 317 (AAGL…VPGL), 338 to 358 (AMNI…GGVI), and 362 to 382 (IGLI…VILT).

It belongs to the major facilitator superfamily.

Its subcellular location is the cell membrane. This is an uncharacterized protein from Bacillus subtilis (strain 168).